The following is a 231-amino-acid chain: MKIGIIGAMDEEVSILKAKLNNMETTIIAGCEFYQGELNGKQVILTKSGIGKVAAAVATTLLLERFNPGQVINTGSAGGYDTTLNVGDIVISTEVRFHDVDLTAFGYEIGQMAQLPAAFPADKNLIFAAQKAAETITHLKTIQGLICTGDIFMADPTKAEIARHNFPTMAACEMEAAAIAQVCYQFKVPFVIIRSLSDIAGKKSELSFEQYLPIAAKNASILVEEIINNLN.

Glu12 serves as the catalytic Proton acceptor. Residues Gly78, Met153, and 174–175 (ME) each bind substrate. Catalysis depends on Asp198, which acts as the Proton donor.

Belongs to the PNP/UDP phosphorylase family. MtnN subfamily.

The catalysed reaction is S-adenosyl-L-homocysteine + H2O = S-(5-deoxy-D-ribos-5-yl)-L-homocysteine + adenine. It catalyses the reaction S-methyl-5'-thioadenosine + H2O = 5-(methylsulfanyl)-D-ribose + adenine. It carries out the reaction 5'-deoxyadenosine + H2O = 5-deoxy-D-ribose + adenine. It functions in the pathway amino-acid biosynthesis; L-methionine biosynthesis via salvage pathway; S-methyl-5-thio-alpha-D-ribose 1-phosphate from S-methyl-5'-thioadenosine (hydrolase route): step 1/2. In terms of biological role, catalyzes the irreversible cleavage of the glycosidic bond in both 5'-methylthioadenosine (MTA) and S-adenosylhomocysteine (SAH/AdoHcy) to adenine and the corresponding thioribose, 5'-methylthioribose and S-ribosylhomocysteine, respectively. Also cleaves 5'-deoxyadenosine, a toxic by-product of radical S-adenosylmethionine (SAM) enzymes, into 5-deoxyribose and adenine. This chain is 5'-methylthioadenosine/S-adenosylhomocysteine nucleosidase, found in Psychromonas ingrahamii (strain DSM 17664 / CCUG 51855 / 37).